Here is a 262-residue protein sequence, read N- to C-terminus: NAD-dependent protein deacylase (262 aa).

The 262-residue stretch at 1-262 (MSNLRRAAEA…AALSPPGVPT (262 aa)) folds into the Deacetylase sirtuin-type domain. 22–42 (GAGISADSGIPTFRDKLTGLW) serves as a coordination point for NAD(+). Tyrosine 67 and arginine 70 together coordinate substrate. An NAD(+)-binding site is contributed by 101–104 (QNID). The active-site Proton acceptor is histidine 119. Residues cysteine 127, cysteine 130, cysteine 155, and cysteine 158 each coordinate Zn(2+). NAD(+) is bound by residues 195-197 (GTS), 221-223 (NLE), and alanine 239.

It belongs to the sirtuin family. Class III subfamily. Requires Zn(2+) as cofactor.

The protein localises to the cytoplasm. The enzyme catalyses N(6)-acetyl-L-lysyl-[protein] + NAD(+) + H2O = 2''-O-acetyl-ADP-D-ribose + nicotinamide + L-lysyl-[protein]. It carries out the reaction N(6)-succinyl-L-lysyl-[protein] + NAD(+) + H2O = 2''-O-succinyl-ADP-D-ribose + nicotinamide + L-lysyl-[protein]. Its function is as follows. NAD-dependent lysine deacetylase and desuccinylase that specifically removes acetyl and succinyl groups on target proteins. Modulates the activities of several proteins which are inactive in their acylated form. The polypeptide is NAD-dependent protein deacylase (Pseudomonas putida (strain ATCC 47054 / DSM 6125 / CFBP 8728 / NCIMB 11950 / KT2440)).